Reading from the N-terminus, the 276-residue chain is Large ribosomal subunit protein uL2 (276 aa).

Disordered stretches follow at residues 38–59 (FQKS…GGHK) and 225–276 (VMNP…RHKR). A compositionally biased stretch (polar residues) spans 39–49 (QKSGRNNNGHI). Over residues 50-59 (TTRHKGGGHK) the composition is skewed to basic residues.

The protein belongs to the universal ribosomal protein uL2 family. In terms of assembly, part of the 50S ribosomal subunit. Forms a bridge to the 30S subunit in the 70S ribosome.

In terms of biological role, one of the primary rRNA binding proteins. Required for association of the 30S and 50S subunits to form the 70S ribosome, for tRNA binding and peptide bond formation. It has been suggested to have peptidyltransferase activity; this is somewhat controversial. Makes several contacts with the 16S rRNA in the 70S ribosome. The sequence is that of Large ribosomal subunit protein uL2 from Cupriavidus necator (strain ATCC 17699 / DSM 428 / KCTC 22496 / NCIMB 10442 / H16 / Stanier 337) (Ralstonia eutropha).